The following is a 213-amino-acid chain: Protein-L-isoaspartate O-methyltransferase (213 aa).

The active site involves Ser-62.

The protein belongs to the methyltransferase superfamily. L-isoaspartyl/D-aspartyl protein methyltransferase family.

It is found in the cytoplasm. It carries out the reaction [protein]-L-isoaspartate + S-adenosyl-L-methionine = [protein]-L-isoaspartate alpha-methyl ester + S-adenosyl-L-homocysteine. Its function is as follows. Catalyzes the methyl esterification of L-isoaspartyl residues in peptides and proteins that result from spontaneous decomposition of normal L-aspartyl and L-asparaginyl residues. It plays a role in the repair and/or degradation of damaged proteins. The polypeptide is Protein-L-isoaspartate O-methyltransferase (Desulfovibrio desulfuricans (strain ATCC 27774 / DSM 6949 / MB)).